Reading from the N-terminus, the 345-residue chain is MRVDLFDFDLPRDLIAVRPAVPRDSARLLLVEGESRRDLGVGDLPGLLDPGDILVFNDTRVIPARLKGRIGDGGVEVTLHKRVGPDAWDCFARPARKLKPGVVILFAEGFTATVAARGEDGEATLRFDRAGAALMAALEAYGHIPLPPYIKRPDDARDRADYQTIYAREDGAVAAPTAGLHFTPALLAALEARGVSRAMVTLHVGAGTFLPVKVEDTDDHRMHAETGTLTAQTAEAINAARAAGGKVVAVGTTAMRLLESATGADKVIRPFHGDTSIFITPGYRFNAVDRLMTNFHLPRSTLFMLVSAFAGASRMRNAYAHAISQGYRFYSYGDSSLLSHAEDPR.

Belongs to the QueA family. Monomer.

It is found in the cytoplasm. The catalysed reaction is 7-aminomethyl-7-carbaguanosine(34) in tRNA + S-adenosyl-L-methionine = epoxyqueuosine(34) in tRNA + adenine + L-methionine + 2 H(+). The protein operates within tRNA modification; tRNA-queuosine biosynthesis. Functionally, transfers and isomerizes the ribose moiety from AdoMet to the 7-aminomethyl group of 7-deazaguanine (preQ1-tRNA) to give epoxyqueuosine (oQ-tRNA). This Rhodospirillum rubrum (strain ATCC 11170 / ATH 1.1.1 / DSM 467 / LMG 4362 / NCIMB 8255 / S1) protein is S-adenosylmethionine:tRNA ribosyltransferase-isomerase.